The primary structure comprises 104 residues: Iron-sulfur cluster assembly protein CyaY (104 aa).

It belongs to the frataxin family.

In terms of biological role, involved in iron-sulfur (Fe-S) cluster assembly. May act as a regulator of Fe-S biogenesis. The sequence is that of Iron-sulfur cluster assembly protein CyaY from Vibrio atlanticus (strain LGP32) (Vibrio splendidus (strain Mel32)).